We begin with the raw amino-acid sequence, 766 residues long: BMP/retinoic acid-inducible neural-specific protein 3 (766 aa).

Positions 1–33 (MIWRRRAGAELSSLMALWEWIVLSLHCWVLAVA) are cleaved as a signal peptide. An MACPF domain is found at 74–264 (RYKIYREFGR…FVQAALSYIA (191 aa)). Residues Asn-168, Asn-337, Asn-456, Asn-562, Asn-609, and Asn-641 are each glycosylated (N-linked (GlcNAc...) asparagine).

It belongs to the BRINP family. Expressed in the brain. Weakly expressed in embryonic stem (ES) cells. Expressed in ES-derived neural stem cells (NSCs) and neuronal cells.

It is found in the secreted. The protein resides in the mitochondrion. Its function is as follows. Inhibits neuronal cell proliferation by negative regulation of the cell cycle transition. Promotes pituitary gonadotrope cell proliferation, migration and invasion, when overexpressed. May play a role in cell pituitary tumor development. The protein is BMP/retinoic acid-inducible neural-specific protein 3 (Brinp3) of Mus musculus (Mouse).